Here is a 510-residue protein sequence, read N- to C-terminus: Histidine ammonia-lyase (510 aa).

A cross-link (5-imidazolinone (Ala-Gly)) is located at residues 145-147; that stretch reads ASG. Position 146 is a 2,3-didehydroalanine (Ser) (serine 146).

The protein belongs to the PAL/histidase family. Contains an active site 4-methylidene-imidazol-5-one (MIO), which is formed autocatalytically by cyclization and dehydration of residues Ala-Ser-Gly.

It localises to the cytoplasm. It carries out the reaction L-histidine = trans-urocanate + NH4(+). Its pathway is amino-acid degradation; L-histidine degradation into L-glutamate; N-formimidoyl-L-glutamate from L-histidine: step 1/3. In Stigmatella aurantiaca, this protein is Histidine ammonia-lyase.